Here is a 216-residue protein sequence, read N- to C-terminus: Adenylate kinase (216 aa).

10-15 serves as a coordination point for ATP; sequence GAGKGT. Residues 30–59 form an NMP region; sequence STGDIFRANIKEKTPLGIEAKRYMDNGQLV. AMP-binding positions include Thr31, Arg36, 57 to 59, 85 to 88, and Gln92; these read QLV and GFPR. The LID stretch occupies residues 126–163; the sequence is GRRVCTSCGASYHIRFNPPKIEGKCDICDNELIQRKDD. An ATP-binding site is contributed by Arg127. Zn(2+) contacts are provided by Cys130 and Cys133. Position 136–137 (136–137) interacts with ATP; the sequence is SY. Cys150 and Cys153 together coordinate Zn(2+). AMP is bound by residues Arg160 and Arg171. An ATP-binding site is contributed by Glu199.

It belongs to the adenylate kinase family. Monomer.

The protein resides in the cytoplasm. It carries out the reaction AMP + ATP = 2 ADP. The protein operates within purine metabolism; AMP biosynthesis via salvage pathway; AMP from ADP: step 1/1. Catalyzes the reversible transfer of the terminal phosphate group between ATP and AMP. Plays an important role in cellular energy homeostasis and in adenine nucleotide metabolism. The sequence is that of Adenylate kinase from Clostridium botulinum (strain Loch Maree / Type A3).